Here is a 765-residue protein sequence, read N- to C-terminus: NADPH oxidase 5 (765 aa).

Positions 1-77 are N-terminal lobe of N-terminal regulatory EF domain; it reads MNTSGDPAQT…LFDSDRSGTI (77 aa). The interval 1–161 is N-terminal regulatory EF domain; the sequence is MNTSGDPAQT…SCLRESAISL (161 aa). At 1–238 the chain is on the cytoplasmic side; it reads MNTSGDPAQT…RAYWHNHRSQ (238 aa). EF-hand domains lie at 26–56 and 57–92; these read RWLRWVTQQFKTIAGEDGEISLQEFKAALHV and KESFFAERFFALFDSDRSGTITLQELQEALTLLIHG. 9 residues coordinate Ca(2+): Asp42, Glu44, Glu49, Asp70, Asp72, Ser74, Thr76, Glu81, and Asp106. Residues 78–161 form a C-terminal lobe of N-terminal regulatory EF domain region; it reads TLQELQEALT…SCLRESAISL (84 aa). An EF-hand 3; atypical; contains an insert of 28 residues domain is found at 93–156; that stretch reads SPMDKLKFLF…RTVLQSCLRE (64 aa). Residue Ile107 is modified to S-nitrosocysteine. 8 residues coordinate Ca(2+): Asp108, Ser138, Ser140, Glu145, Asp178, Asp180, Asn182, and Glu189. The tract at residues 122-141 is disordered; the sequence is GAGAGPHWASSPLGTGSGSI. The region spanning 165–200 is the EF-hand 4 domain; the sequence is KLDQLTLALFESADADGNGAITFEELRDELQRFPGV. The chain crosses the membrane as a helical span at residues 239–259; the sequence is LFCLATYAGLHVLLFGLAASA. Residue Ala246 is modified to S-nitrosocysteine. Over 260–266 the chain is Extracellular; sequence HRDLGAS. The chain crosses the membrane as a helical span at residues 267–289; it reads VMVAKGCGQCLNFDCSFIAVLML. Residues 290–317 are Cytoplasmic-facing; that stretch reads RRCLTWLRATWLAQVLPLDQNIQFHQLM. The Ferric oxidoreductase domain maps to 293 to 440; sequence LTWLRATWLA…FLEKAIGLAV (148 aa). Residues 318-338 form a helical membrane-spanning segment; that stretch reads GYVVVGLSLVHTVAHTVNFVL. At 339–362 the chain is on the extracellular side; the sequence is QAQAEASPFQFWELLLTTRPGIGW. A helical membrane pass occupies residues 363–383; that stretch reads VHGSASPTGVALLLLLLLMFI. Over 384-394 the chain is Cytoplasmic; sequence CSSSCIRRSGH. Residues 395 to 417 traverse the membrane as a helical segment; the sequence is FEVFYWTHLSYLLVWLLLIFHGP. C-terminal catalytic dehydrogenase domain regions lie at residues 398–719 and 416–737; these read FYWT…GRPD and GPNF…KVQV. Residues 418–434 lie on the Extracellular side of the membrane; sequence NFWKWLLVPGILFFLEK. The chain crosses the membrane as a helical span at residues 435 to 455; it reads AIGLAVSRMAAVCIMEVNLLP. Residues 441–577 form the FAD-binding FR-type domain; the sequence is SRMAAVCIME…DGPYGTPTRR (137 aa). Over 456 to 583 the chain is Cytoplasmic; that stretch reads SKVTHLLIKR…PTRRIFASEH (128 aa). Asp475 carries the phosphoserine; by CaMK2 modification. The residue at position 490 (His490) is a Phosphothreonine; by PKC/PRKCA. Residue Ile494 is modified to Phosphothreonine; by CaMK2 and PKC/PRKCA. Residue Pro498 is modified to Phosphoserine; by CaMK2 and PKC/PRKCA. The residue at position 502 (Asp502) is a Phosphoserine; by CaMK2. At Tyr519 the chain carries S-nitrosocysteine. Residues 584-604 traverse the membrane as a helical segment; that stretch reads AVLIGAGIGITPFASILQSIM. At 605 to 765 the chain is on the extracellular side; sequence YRHQKRKHTC…FGFRFFQENF (161 aa). The residue at position 659 (Asp659) is a Phosphoserine; by CaMK2. Position 694 is an S-nitrosocysteine (Leu694).

In terms of assembly, homooligomer. Requires FAD as cofactor. Mg(2+) serves as cofactor. In terms of processing, phosphorylation at Ser-475 by CaMK2 and at Ser-490, Thr-494 and Ser-498 by PKC/PRKCA positively regulates its catalytic activity. Post-translationally, S-nitrosylation in response to nitric oxide inhibits its catalytic activity. As to expression, mainly expressed in pachytene spermatocytes of testis and in lymphocyte-rich areas of spleen and lymph nodes. Also detected in ovary, placenta, pancreas, cardiac fibroblasts. Expressed in B-cells and prostate malignant cells. Expressed in spleen. Expressed in endothelial cells, pulmonary artery smooth muscle cells and epithelial colorectal adenocarcinoma cells. In terms of tissue distribution, expressed in microvascular endothelial cells (at protein level). Expressed in testis. Expressed in endothelial cells and pulmonary artery smooth muscle cells. As to expression, expressed in pulmonary artery smooth muscle cells and epithelial colorectal adenocarcinoma cells. Expressed in endothelial cells and pulmonary artery smooth muscle cells. In terms of tissue distribution, expressed in microvascular endothelial cells (at protein level).

It is found in the endoplasmic reticulum. The protein localises to the cell membrane. It carries out the reaction NADPH + 2 O2 = 2 superoxide + NADP(+) + H(+). Activated by calcium which induces conformational changes and interaction between the N-terminal regulatory region and the C-terminal catalytic region. Inhibited by diphenylene iodonium. Its function is as follows. Calcium-dependent NADPH oxidase that catalyzes the generation of superoxide from molecular oxygen utilizing NADPH as an electron donor. May play a role in cell growth and apoptosis. In terms of biological role, calcium-dependent NADPH oxidase that catalyzes the generation of superoxide from molecular oxygen utilizing NADPH as an electron donor. Involved in endothelial generation of reactive oxygen species (ROS), proliferation and angiogenesis and contributes to endothelial response to thrombin. Regulates redox-dependent processes in lymphocytes and spermatozoa. Functionally, calcium-dependent NADPH oxidase that catalyzes the generation of superoxide from molecular oxygen utilizing NADPH as an electron donor. This isoform lacks calcium-binding domains and was showed to present a NADPH oxidase activity in a calcium-independent manner. May be involved in endothelial generation of reactive oxygen species (ROS), proliferation and angiogenesis and contribute to endothelial response to thrombin. However another study showed an absence of oxidase activity. Subject to rapid degradation. Its function is as follows. Lacks calcium-dependent NADPH oxidase activity. This chain is NADPH oxidase 5, found in Homo sapiens (Human).